A 255-amino-acid polypeptide reads, in one-letter code: MSSIGTGYDLSASTFSPDGRVFQVEYAMKAVENSSTAIGIRCKDGVVFGVEKLVLSKLYEEGSNKRLFNVDRHVGMAVAGLLADARSLADIAREEASNFRSNFGYNIPLKHLADRVAMYVHAYTLYSAVRPFGCSFMLGSYSANDGAQLYMIDPSGVSYGYWGCAIGKARQAAKTEIEKLQMKEMTCRDVVKEVAKIIYIVHDEVKDKAFELELSWVGELTKGRHEIVPKDIREEAEKYAKESLKEEDESDDDNM.

Serine 2 is modified (N-acetylserine). N6-acetyllysine occurs at positions 57, 206, and 230. Serine 243 and serine 250 each carry phosphoserine.

Belongs to the peptidase T1A family. The 26S proteasome consists of a 20S proteasome core and two 19S regulatory subunits. The 20S proteasome core is a barrel-shaped complex made of 28 subunits that are arranged in four stacked rings. The two outer rings are each formed by seven alpha subunits, and the two inner rings are formed by seven beta subunits. The proteolytic activity is exerted by three beta-subunits PSMB5, PSMB6 and PSMB7. Interacts with AURKB. Interacts with CDKN1A. Interacts with MDM2 and RB1. Interacts with the C-terminus of TBXA2R isoform 2. Interacts with DNAJB2. As to expression, detected in liver (at protein level).

It localises to the cytoplasm. The protein localises to the nucleus. In terms of biological role, component of the 20S core proteasome complex involved in the proteolytic degradation of most intracellular proteins. This complex plays numerous essential roles within the cell by associating with different regulatory particles. Associated with two 19S regulatory particles, forms the 26S proteasome and thus participates in the ATP-dependent degradation of ubiquitinated proteins. The 26S proteasome plays a key role in the maintenance of protein homeostasis by removing misfolded or damaged proteins that could impair cellular functions, and by removing proteins whose functions are no longer required. Associated with the PA200 or PA28, the 20S proteasome mediates ubiquitin-independent protein degradation. This type of proteolysis is required in several pathways including spermatogenesis (20S-PA200 complex) or generation of a subset of MHC class I-presented antigenic peptides (20S-PA28 complex). Binds to the C-terminus of CDKN1A and thereby mediates its degradation. Negatively regulates the membrane trafficking of the cell-surface thromboxane A2 receptor (TBXA2R) isoform 2. This Mus musculus (Mouse) protein is Proteasome subunit alpha type-3 (Psma3).